Reading from the N-terminus, the 240-residue chain is Pathogenesis-related thaumatin-like protein 3.5 (240 aa).

An N-terminal signal peptide occupies residues 1–20 (MASLRLATLAMMVLFGSCRA). Intrachain disulfides connect Cys31–Cys237, Cys79–Cys89, Cys94–Cys100, Cys145–Cys227, Cys150–Cys210, Cys158–Cys173, Cys177–Cys186, and Cys187–Cys197.

Belongs to the thaumatin family. As to expression, strongly expressed in pollen grains. Also present at weak levels in seedling roots, in sapling stems and in developing male strobili.

May be involved in disease resistance. This is Pathogenesis-related thaumatin-like protein 3.5 from Cryptomeria japonica (Japanese cedar).